A 385-amino-acid polypeptide reads, in one-letter code: Spindle pole component BBP1 (385 aa).

Serine 29 is subject to Phosphoserine. Basic and acidic residues predominate over residues tyrosine 34–glutamine 48. The interval tyrosine 34–glycine 76 is disordered. Residues arginine 64 to serine 75 are compositionally biased toward low complexity. Phosphoserine is present on residues serine 73 and serine 115. The stretch at glutamine 229–serine 355 forms a coiled coil.

It belongs to the BBP1 family. In terms of assembly, homodimer. Interacts with KAR1, MPS2 and SPC29.

The protein resides in the cytoplasm. It is found in the cytoskeleton. The protein localises to the microtubule organizing center. It localises to the spindle pole body. Its function is as follows. Component of the spindle pole body (SPB) required for insertion of the nascent SPB into the nuclear envelope and for the proper execution of spindle pole body (SPB) duplication. Connects the central plaque of the SPB with the half-bridge. Required for proper localization of CDC5 at the SPB and for proper M-phase progression. This Saccharomyces cerevisiae (strain ATCC 204508 / S288c) (Baker's yeast) protein is Spindle pole component BBP1 (BBP1).